We begin with the raw amino-acid sequence, 344 residues long: Transcription factor HRS1 (344 aa).

Positions 88-184 (IKDSSTSNEE…DGGGGRKQRR (97 aa)) are disordered. Residues 95–104 (NEEEDEEFDD) are compositionally biased toward acidic residues. Composition is skewed to basic and acidic residues over residues 105 to 124 (EHGNHDPDNDSEDKNTKSDW) and 138 to 178 (LLPK…DGGG). Positions 178 to 238 (GGRKQRRCWS…HLQKYRLHTR (61 aa)) constitute an HTH myb-type domain. A DNA-binding region (H-T-H motif) is located at residues 209–234 (PKQIREFMKVDGLTNDEVKSHLQKYR). Over residues 269 to 291 (STGKTTGGATTSSTTTTTGIYGT) the composition is skewed to low complexity. The segment at 269-322 (STGKTTGGATTSSTTTTTGIYGTMAAPPPPQWPSHSNYRPSIIVDEGSGSHSEG) is disordered.

Expressed in the root hair region and root hair cells.

The protein localises to the nucleus. Functionally, transcription factor involved in nitrate and phosphate signaling in roots. Integrates nitrate and phosphate starvation responses and adaptation of root architecture depending on nutrient availabilities. Acts downstream of the nitrate sensor and transporter NPF6.3/NRT1.1. Represses primary root development in response to phosphate deficiency conditions, only when nitrate is present. Involved in the modulation of primary root and root hair growth in phosphate-deprived environment. May be required for suppressing abscisic acid (ABA) signaling in germinating embryo axis, which promotes the timely germination of seeds. The chain is Transcription factor HRS1 from Arabidopsis thaliana (Mouse-ear cress).